The chain runs to 215 residues: uncharacterized protein (215 aa).

The signal sequence occupies residues 1–29 (MDKVQSGFLILFLFLMECQLHLCLPYADG). Over 30-100 (LHPTGNITGL…IIRHRPALVK (71 aa)) the chain is Extracellular. Residues 101-121 (VILISSVAFSIALICGMAISY) traverse the membrane as a helical segment. Topologically, residues 122-215 (MIYRLAQAEE…ASHNGKMEDL (94 aa)) are cytoplasmic. The interval 191-215 (LKEEQNSVTENKTKNASHNGKMEDL) is disordered. The segment covering 196-208 (NSVTENKTKNASH) has biased composition (polar residues).

The protein localises to the membrane. This is an uncharacterized protein from Homo sapiens (Human).